The primary structure comprises 362 residues: MTKLLIALILFSICWKPYSAEPIASFFDGLDSRNECKARLDRRLTGFSGLLYSHSKYGQEPYNTSRNCVLMLVAPIGYSIRVRALQFDVASTENARTCEKDTLHVFDHETTLDPESYAPARIDDITSPGPIIGQFCGHFENRILNTSSHNALTLWWHSNPNGSNSKGFKLHWGSFRVSKTGNCVTGEFSCGNGECIPIESACDRFADCSNGEDLIHSRQMAANCQNIELDPLTTVSGVFVLLFSATIILSLCGFIMFVCCLCKCLKSTIPIKGASSHTTTTTATDYKPDPPQFYPPSPPKMPPPSAASSYTPRLHHHFEGPLVPSETSAFHSSNRMQNHYSVNSDINGDYTYVRNDVHRNLL.

The signal sequence occupies residues 1–20 (MTKLLIALILFSICWKPYSA). The Extracellular portion of the chain corresponds to 21 to 237 (EPIASFFDGL…ELDPLTTVSG (217 aa)). 2 disulfide bridges follow: cysteine 36–cysteine 68 and cysteine 98–cysteine 136. Positions 36 to 175 (CKARLDRRLT…KGFKLHWGSF (140 aa)) constitute a CUB domain. Asparagine 63 is a glycosylation site (N-linked (GlcNAc...) asparagine). N-linked (GlcNAc...) asparagine glycans are attached at residues asparagine 145 and asparagine 161. One can recognise an LDL-receptor class A domain in the interval 182–225 (NCVTGEFSCGNGECIPIESACDRFADCSNGEDLIHSRQMAANCQ). 3 disulfides stabilise this stretch: cysteine 183–cysteine 195, cysteine 190–cysteine 208, and cysteine 202–cysteine 224. Residues 238-258 (VFVLLFSATIILSLCGFIMFV) traverse the membrane as a helical segment. Topologically, residues 259-362 (CCLCKCLKST…VRNDVHRNLL (104 aa)) are cytoplasmic. The disordered stretch occupies residues 275 to 311 (SSHTTTTTATDYKPDPPQFYPPSPPKMPPPSAASSYT). Residues 289–305 (DPPQFYPPSPPKMPPPS) are compositionally biased toward pro residues.

In terms of assembly, interacts with abl-1 (via SH2 and SH3 domains); the interaction is direct. Interacts with sem-5; the interaction is direct. In terms of tissue distribution, expressed in pharyngeal-intestinal valve cells and ventral cord neurons.

It localises to the cell membrane. It is found in the perikaryon. Its subcellular location is the cell projection. The protein localises to the axon. The protein resides in the dendrite. Probable receptor that acts as an upstream signaling protein to promote the guidance, migration and positioning of the right Q neuroblast (QR) and its descendants along the anteroposterior body axis, and also the anterior migration of BDU interneurons during larval development. Associates with and recruits the downstream components tyrosine kinase abl-1 and the tyrosine kinase adapter protein sem-5 to the leading edge of migrating Q neuroblasts and their descendants to activate signaling through the two parallel wve-1 and wsp-1 pathways, respectively, and direct migration along the anteroposterior body axis. Involved in cytoskeleton dynamics regulating the organization of the actin cytoskeleton at the leading edge of migrating cells to ensure correct Q cell polarity and promote migration. Role in cytoskeleton organization may be by activation of the wve-1 and wsp-1 pathways which recruit the Arp2/3 complex to the leading edge of migrating cells. Plays a role in regulating the asymmetric distribution of the actin cytoskeleton-binding protein cor-1 in Q neuroblasts which is required for the anterior migration of QR neuroblasts. This is Abnormal cell migration protein 13 from Caenorhabditis elegans.